The sequence spans 296 residues: Ribosomal protein L11 methyltransferase (296 aa).

Residues Thr-151, Gly-172, Asp-194, and Asn-233 each coordinate S-adenosyl-L-methionine.

The protein belongs to the methyltransferase superfamily. PrmA family.

Its subcellular location is the cytoplasm. The catalysed reaction is L-lysyl-[protein] + 3 S-adenosyl-L-methionine = N(6),N(6),N(6)-trimethyl-L-lysyl-[protein] + 3 S-adenosyl-L-homocysteine + 3 H(+). Methylates ribosomal protein L11. This is Ribosomal protein L11 methyltransferase from Dechloromonas aromatica (strain RCB).